A 601-amino-acid polypeptide reads, in one-letter code: Glutathione-regulated potassium-efflux system protein KefB (601 aa).

The next 13 membrane-spanning stretches (helical) occupy residues 4 to 24, 29 to 49, 55 to 75, 87 to 107, 115 to 135, 152 to 172, 177 to 197, 207 to 227, 230 to 250, 268 to 288, 291 to 311, 324 to 344, and 356 to 376; these read SDFLLAGVLFLFAAVAAVPLA, IGAVLGYLLAGIAIGPWGLGF, EILHFSELGVVFLMFIIGLEL, IFGVGAAQVLLSAALLAGLLM, AAVVGGIGLAMSSTAMALQLM, VLLFQDLAVIPALALVPLLAG, HFDWMKIGMKVLAFVGMLIGG, FIAASGVREVFTAATLLLVLG, LFMDALGLSMALGTFIAGVLL, GLLLGLFFISVGMSLNLGVLY, LLWVVISVVVLVAVKILVLYL, MQFAGVLSQGGEFAFVLFSTA, and ALLLVTVTLSMMTTPLLMKLV. In terms of domain architecture, RCK N-terminal spans 400 to 519; the sequence is KPQVIVVGFG…AGVTQFSRET (120 aa).

The protein belongs to the monovalent cation:proton antiporter 2 (CPA2) transporter (TC 2.A.37) family. KefB subfamily. As to quaternary structure, interacts with the regulatory subunit KefG.

It localises to the cell inner membrane. Pore-forming subunit of a potassium efflux system that confers protection against electrophiles. Catalyzes K(+)/H(+) antiport. This Shigella sonnei (strain Ss046) protein is Glutathione-regulated potassium-efflux system protein KefB.